The sequence spans 127 residues: Cytochrome c' (127 aa).

Pyrrolidone carboxylic acid is present on Gln1. Heme c contacts are provided by Arg12, Gln13, Asp67, Cys116, Cys119, and His120.

As to quaternary structure, homodimer. Post-translationally, binds 1 heme c group covalently per subunit.

It is found in the periplasm. Cytochrome c' is the most widely occurring bacterial c-type cytochrome. Cytochromes c' are high-spin proteins and the heme has no sixth ligand. Their exact function is not known. This is Cytochrome c' from Alcaligenes xylosoxydans xylosoxydans (Achromobacter xylosoxidans).